Here is a 223-residue protein sequence, read N- to C-terminus: Thiamine-phosphate synthase (223 aa).

Residues Gln45–Lys49 and Asn77 contribute to the 4-amino-2-methyl-5-(diphosphooxymethyl)pyrimidine site. The Mg(2+) site is built by Asp78 and Asp97. Thr116 is a 4-amino-2-methyl-5-(diphosphooxymethyl)pyrimidine binding site. Ser142–Thr144 provides a ligand contact to 2-[(2R,5Z)-2-carboxy-4-methylthiazol-5(2H)-ylidene]ethyl phosphate. Lys145 contributes to the 4-amino-2-methyl-5-(diphosphooxymethyl)pyrimidine binding site. Residues Gly173 and Val193 to Thr194 contribute to the 2-[(2R,5Z)-2-carboxy-4-methylthiazol-5(2H)-ylidene]ethyl phosphate site.

Belongs to the thiamine-phosphate synthase family. It depends on Mg(2+) as a cofactor.

It carries out the reaction 2-[(2R,5Z)-2-carboxy-4-methylthiazol-5(2H)-ylidene]ethyl phosphate + 4-amino-2-methyl-5-(diphosphooxymethyl)pyrimidine + 2 H(+) = thiamine phosphate + CO2 + diphosphate. The enzyme catalyses 2-(2-carboxy-4-methylthiazol-5-yl)ethyl phosphate + 4-amino-2-methyl-5-(diphosphooxymethyl)pyrimidine + 2 H(+) = thiamine phosphate + CO2 + diphosphate. It catalyses the reaction 4-methyl-5-(2-phosphooxyethyl)-thiazole + 4-amino-2-methyl-5-(diphosphooxymethyl)pyrimidine + H(+) = thiamine phosphate + diphosphate. The protein operates within cofactor biosynthesis; thiamine diphosphate biosynthesis; thiamine phosphate from 4-amino-2-methyl-5-diphosphomethylpyrimidine and 4-methyl-5-(2-phosphoethyl)-thiazole: step 1/1. Its function is as follows. Condenses 4-methyl-5-(beta-hydroxyethyl)thiazole monophosphate (THZ-P) and 2-methyl-4-amino-5-hydroxymethyl pyrimidine pyrophosphate (HMP-PP) to form thiamine monophosphate (TMP). This chain is Thiamine-phosphate synthase, found in Dictyoglomus turgidum (strain DSM 6724 / Z-1310).